We begin with the raw amino-acid sequence, 986 residues long: Translation initiation factor IF-2 (986 aa).

Over residues Lys75 to Leu94 the composition is skewed to basic and acidic residues. 4 disordered regions span residues Lys75–Leu105, Pro127–Pro148, Ser185–Asp258, and Gly277–Asp394. Low complexity-rich tracts occupy residues Ser185–Leu210 and Ser218–Ile235. Over residues Asp292–Val313 the composition is skewed to basic and acidic residues. Low complexity predominate over residues Ala315 to Ser338. Over residues Ala339–Lys348 the composition is skewed to basic residues. Positions Thr483–Arg653 constitute a tr-type G domain. Residues Gly492–Thr499 are G1. Gly492–Thr499 provides a ligand contact to GTP. The interval Gly517 to His521 is G2. Residues Asp539–Gly542 are G3. Residues Asp539 to His543 and Asn593 to Asp596 each bind GTP. Residues Asn593–Asp596 are G4. The segment at Ser629–Lys631 is G5.

Belongs to the TRAFAC class translation factor GTPase superfamily. Classic translation factor GTPase family. IF-2 subfamily.

The protein resides in the cytoplasm. Its function is as follows. One of the essential components for the initiation of protein synthesis. Protects formylmethionyl-tRNA from spontaneous hydrolysis and promotes its binding to the 30S ribosomal subunits. Also involved in the hydrolysis of GTP during the formation of the 70S ribosomal complex. The polypeptide is Translation initiation factor IF-2 (Pelodictyon phaeoclathratiforme (strain DSM 5477 / BU-1)).